The chain runs to 185 residues: Pyridoxal 5'-phosphate synthase subunit PdxT (185 aa).

Position 46-48 (46-48 (GES)) interacts with L-glutamine. The Nucleophile role is filled by C75. Residues R101 and 129-130 (IR) each bind L-glutamine. Residues H165 and E167 each act as charge relay system in the active site.

This sequence belongs to the glutaminase PdxT/SNO family. In terms of assembly, in the presence of PdxS, forms a dodecamer of heterodimers. Only shows activity in the heterodimer.

The enzyme catalyses aldehydo-D-ribose 5-phosphate + D-glyceraldehyde 3-phosphate + L-glutamine = pyridoxal 5'-phosphate + L-glutamate + phosphate + 3 H2O + H(+). The catalysed reaction is L-glutamine + H2O = L-glutamate + NH4(+). It functions in the pathway cofactor biosynthesis; pyridoxal 5'-phosphate biosynthesis. In terms of biological role, catalyzes the hydrolysis of glutamine to glutamate and ammonia as part of the biosynthesis of pyridoxal 5'-phosphate. The resulting ammonia molecule is channeled to the active site of PdxS. In Staphylococcus epidermidis (strain ATCC 12228 / FDA PCI 1200), this protein is Pyridoxal 5'-phosphate synthase subunit PdxT.